The sequence spans 239 residues: NAD-dependent protein deacylase (239 aa).

In terms of domain architecture, Deacetylase sirtuin-type spans 1 to 239 (MNVLILTGAG…PKLLNHFSAM (239 aa)). Residue 8–27 (GAGISAESGIPTFRDANGLW) coordinates NAD(+). Y52 and R55 together coordinate substrate. Residue 93–96 (QNID) participates in NAD(+) binding. The Proton acceptor role is filled by H111. Residues 182-184 (GTS), 207-209 (NLD), and A225 contribute to the NAD(+) site.

Belongs to the sirtuin family. Class III subfamily.

It is found in the cytoplasm. It catalyses the reaction N(6)-acetyl-L-lysyl-[protein] + NAD(+) + H2O = 2''-O-acetyl-ADP-D-ribose + nicotinamide + L-lysyl-[protein]. The catalysed reaction is N(6)-succinyl-L-lysyl-[protein] + NAD(+) + H2O = 2''-O-succinyl-ADP-D-ribose + nicotinamide + L-lysyl-[protein]. Its function is as follows. NAD-dependent lysine deacetylase and desuccinylase that specifically removes acetyl and succinyl groups on target proteins. Modulates the activities of several proteins which are inactive in their acylated form. The sequence is that of NAD-dependent protein deacylase from Rhodopirellula baltica (strain DSM 10527 / NCIMB 13988 / SH1).